A 323-amino-acid chain; its full sequence is Olfactory receptor 5P58 (323 aa).

At methionine 1–valine 28 the chain is on the extracellular side. An N-linked (GlcNAc...) asparagine glycan is attached at asparagine 8. The chain crosses the membrane as a helical span at residues isoleucine 29–isoleucine 49. Residues leucine 50–glutamine 57 lie on the Cytoplasmic side of the membrane. A helical transmembrane segment spans residues leucine 58–serine 78. The Extracellular portion of the chain corresponds to serine 79–isoleucine 102. The N-linked (GlcNAc...) asparagine glycan is linked to asparagine 92. Cysteine 100 and cysteine 192 are oxidised to a cystine. The helical transmembrane segment at glutamine 103–tyrosine 123 threads the bilayer. Residues aspartate 124 to serine 136 lie on the Cytoplasmic side of the membrane. Residues isoleucine 137–leucine 157 traverse the membrane as a helical segment. Residues asparagine 158–valine 199 lie on the Extracellular side of the membrane. Residues alanine 200–serine 220 form a helical membrane-spanning segment. The Cytoplasmic portion of the chain corresponds to tyrosine 221–alanine 240. Residues phenylalanine 241–isoleucine 261 traverse the membrane as a helical segment. At tyrosine 262–asparagine 274 the chain is on the extracellular side. A glycan (N-linked (GlcNAc...) asparagine) is linked at asparagine 268. A helical transmembrane segment spans residues lysine 275–leucine 295. At arginine 296–serine 323 the chain is on the cytoplasmic side.

The protein belongs to the G-protein coupled receptor 1 family.

It is found in the cell membrane. Its function is as follows. Potential odorant receptor. This Mus musculus (Mouse) protein is Olfactory receptor 5P58.